Consider the following 159-residue polypeptide: Thymic stromal lymphopoietin (159 aa).

A signal peptide spans methionine 1–threonine 28. 3 disulfide bridges follow: cysteine 34–cysteine 110, cysteine 69–cysteine 75, and cysteine 90–cysteine 137. Residue asparagine 64 is glycosylated (N-linked (GlcNAc...) asparagine). Asparagine 119 carries N-linked (GlcNAc...) asparagine glycosylation.

Interacts with a receptor composed of CRLF2 and IL7R. Binding of TSLP to CRLF2/TSLPR is a mechanistic prerequisite for recruitment of IL7R to the high-affinity ternary complex. As to expression, isoform 1 is expressed in a number of tissues including heart, liver and prostate. Isoform 2 is the predominant form in keratinocytes of oral mucosa, skin and in salivary glands. It is secreted into saliva.

The protein localises to the secreted. In terms of biological role, cytokine that induces the release of T-cell-attracting chemokines from monocytes and, in particular, enhances the maturation of CD11c(+) dendritic cells. Can induce allergic inflammation by directly activating mast cells. Its function is as follows. May act as an antimicrobial peptide in the oral cavity and on the skin. This chain is Thymic stromal lymphopoietin (TSLP), found in Homo sapiens (Human).